The chain runs to 431 residues: Ribosomal RNA small subunit methyltransferase B (431 aa).

Residues 254 to 260 (CAAPGGK), D277, D303, and D322 each bind S-adenosyl-L-methionine. Residue C375 is the Nucleophile of the active site. The tract at residues 398–417 (LHATGTPASPGQQNLPGPEE) is disordered. Over residues 403–412 (TPASPGQQNL) the composition is skewed to polar residues.

Belongs to the class I-like SAM-binding methyltransferase superfamily. RsmB/NOP family.

Its subcellular location is the cytoplasm. It catalyses the reaction cytidine(967) in 16S rRNA + S-adenosyl-L-methionine = 5-methylcytidine(967) in 16S rRNA + S-adenosyl-L-homocysteine + H(+). Functionally, specifically methylates the cytosine at position 967 (m5C967) of 16S rRNA. The polypeptide is Ribosomal RNA small subunit methyltransferase B (Klebsiella pneumoniae (strain 342)).